Consider the following 439-residue polypeptide: Glutamate--tRNA ligase 1 (439 aa).

The 'HIGH' region signature appears at 6 to 16 (PSPTGDMHIGN). The 'KMSKS' region signature appears at 232 to 236 (KMSKR). Residue Lys235 coordinates ATP.

It belongs to the class-I aminoacyl-tRNA synthetase family. Glutamate--tRNA ligase type 1 subfamily. As to quaternary structure, monomer.

The protein resides in the cytoplasm. The enzyme catalyses tRNA(Glu) + L-glutamate + ATP = L-glutamyl-tRNA(Glu) + AMP + diphosphate. Its function is as follows. Catalyzes the attachment of glutamate to tRNA(Glu) in a two-step reaction: glutamate is first activated by ATP to form Glu-AMP and then transferred to the acceptor end of tRNA(Glu). The sequence is that of Glutamate--tRNA ligase 1 from Helicobacter acinonychis (strain Sheeba).